Reading from the N-terminus, the 559-residue chain is MPVINFTYEELFEQLGEELPKDELINILPMISSDVESYDDVEVKAEFFPNRPDYYSVEGIVRSLKGYLELEKGIPEYDVKKTDTTITVDSELENIRPYVACCMIKNVKIDDNQLRNIMEFQEHLHWVIGRDRKKVAIGIHDLDKVEGPFYYKAGNPNETSFIPLESRENLTLNEILENHEKGEKYAKLLKEFDKYPLIVDGNGNIMSMPPIINSELTKLTTKTTNLFIDVTGTDINAVTNALNIIAANLSENGATIETIEVNYPYHDNKTYPDFEPKIIDVHTKTAQEYIGIDLTADKIVETLEKTRFNATKINEETVRVTVPRYRIDILHEVDIIENIALGYGFNELPAQLPDFATVANPDSKRQFDQILEQVMIGLSFTEIKSLMLTSETQHYTKLRKEVEEDRVTVAQPITQDRTMIRKSLINSLLEFLEDNKHEELPQKIFEIGDVAYINENAETKMVTVKKLAAAQISSVANFTTIKSIVESFVANMGFEMELEDHDDSAFIKGRCAKFTTKPLNKNTPFTFKGYFGEIHPEVLTNFELEYPVIAFEVEFSEVE.

The B5 domain occupies 274 to 350 (FEPKIIDVHT…LGYGFNELPA (77 aa)). 4 residues coordinate Mg(2+): aspartate 328, aspartate 334, glutamate 337, and asparagine 338.

This sequence belongs to the phenylalanyl-tRNA synthetase beta subunit family. Type 2 subfamily. In terms of assembly, tetramer of two alpha and two beta subunits. It depends on Mg(2+) as a cofactor.

It is found in the cytoplasm. It catalyses the reaction tRNA(Phe) + L-phenylalanine + ATP = L-phenylalanyl-tRNA(Phe) + AMP + diphosphate + H(+). The chain is Phenylalanine--tRNA ligase beta subunit from Methanosphaera stadtmanae (strain ATCC 43021 / DSM 3091 / JCM 11832 / MCB-3).